Consider the following 64-residue polypeptide: Large ribosomal subunit protein bL35 (64 aa).

The protein belongs to the bacterial ribosomal protein bL35 family.

This is Large ribosomal subunit protein bL35 from Ureaplasma urealyticum serovar 10 (strain ATCC 33699 / Western).